The chain runs to 455 residues: Adenylyltransferase and sulfurtransferase MOCS3 (455 aa).

ATP contacts are provided by residues glycine 90, aspartate 111, serine 118–arginine 122, lysine 135, and aspartate 179–asparagine 180. An interaction with NFS1 region spans residues alanine 156–asparagine 236. Residues cysteine 220 and cysteine 223 each coordinate Zn(2+). Cysteine 237 functions as the Glycyl thioester intermediate; for adenylyltransferase activity in the catalytic mechanism. Residues cysteine 295 and cysteine 298 each coordinate Zn(2+). Cysteine 314 and cysteine 322 are disulfide-bonded. The 109-residue stretch at serine 345–proline 453 folds into the Rhodanese domain. Cysteine 410 serves as the catalytic Cysteine persulfide intermediate; for sulfurtransferase activity. A Cysteine persulfide modification is found at cysteine 410.

This sequence in the N-terminal section; belongs to the HesA/MoeB/ThiF family. UBA4 subfamily. Interacts with NFS1. It depends on Zn(2+) as a cofactor.

The protein resides in the cytoplasm. Its subcellular location is the cytosol. The catalysed reaction is [molybdopterin-synthase sulfur-carrier protein]-C-terminal Gly-Gly + ATP + H(+) = [molybdopterin-synthase sulfur-carrier protein]-C-terminal Gly-Gly-AMP + diphosphate. It carries out the reaction [molybdopterin-synthase sulfur-carrier protein]-C-terminal Gly-Gly-AMP + S-sulfanyl-L-cysteinyl-[cysteine desulfurase] + AH2 = [molybdopterin-synthase sulfur-carrier protein]-C-terminal-Gly-aminoethanethioate + L-cysteinyl-[cysteine desulfurase] + A + AMP + 2 H(+). It functions in the pathway tRNA modification; 5-methoxycarbonylmethyl-2-thiouridine-tRNA biosynthesis. Its pathway is cofactor biosynthesis; molybdopterin biosynthesis. Its function is as follows. Plays a central role in 2-thiolation of mcm(5)S(2)U at tRNA wobble positions of cytosolic tRNA(Lys), tRNA(Glu) and tRNA(Gln). Also essential during biosynthesis of the molybdenum cofactor. Acts by mediating the C-terminal thiocarboxylation of sulfur carriers URM1 and MOCS2A. Its N-terminus first activates URM1 and MOCS2A as acyl-adenylates (-COAMP), then the persulfide sulfur on the catalytic cysteine is transferred to URM1 and MOCS2A to form thiocarboxylation (-COSH) of their C-terminus. The reaction probably involves hydrogen sulfide that is generated from the persulfide intermediate and that acts as a nucleophile towards URM1 and MOCS2A. Subsequently, a transient disulfide bond is formed. Does not use thiosulfate as sulfur donor; NFS1 acting as a sulfur donor for thiocarboxylation reactions. The chain is Adenylyltransferase and sulfurtransferase MOCS3 from Sus scrofa (Pig).